A 212-amino-acid polypeptide reads, in one-letter code: uncharacterized protein (212 aa).

S-adenosyl-L-methionine is bound by residues Gly53 and Glu74.

The protein belongs to the methyltransferase superfamily. YrrT family.

Its function is as follows. Could be a S-adenosyl-L-methionine-dependent methyltransferase. This is an uncharacterized protein from Exiguobacterium sibiricum (strain DSM 17290 / CCUG 55495 / CIP 109462 / JCM 13490 / 255-15).